The primary structure comprises 630 residues: Adagio-like protein 3 (630 aa).

One can recognise a PAS domain in the interval 54–126 (EDEAAAWEGR…PLVDPMVVSE (73 aa)). At Cys102 the chain carries S-4a-FMN cysteine. Residues 220–268 (YCCILQLSDEVLAHNILSRLSPRDVASIGSVCTRMHELTKNDHLRKMVC) form the F-box domain. Kelch repeat units follow at residues 380 to 430 (SWLV…CTLD), 432 to 483 (SKLV…SVFG), 485 to 537 (TKLF…RLDH), 545 to 597 (GRII…CVVG), and 599 to 629 (TRVL…PDED).

This sequence belongs to the ADAGIO family. In terms of processing, FMN binds covalently to cysteine after exposure to blue light and is reversed in the dark.

The protein localises to the nucleus. Its pathway is protein modification; protein ubiquitination. In terms of biological role, component of an E3 ubiquitin ligase complex that plays a central role in blue light-dependent circadian cycles. Acts as a blue light photoreceptor, due to the presence of FMN, that mediates light-regulated protein degradation of critical clock components by targeting them to the proteasome complex. The SCF(ADO3) E3 ubiquitin ligase complex is involved in the regulation of circadian clock-dependent processes including transition to flowering time, hypocotyl elongation, cotyledons and leaf movement rhythms. The polypeptide is Adagio-like protein 3 (Oryza sativa subsp. japonica (Rice)).